Consider the following 317-residue polypeptide: Beta-ketoacyl-[acyl-carrier-protein] synthase III (317 aa).

Residues Cys112 and His244 contribute to the active site. The interval 245–249 (QANIR) is ACP-binding. The active site involves Asn274.

Belongs to the thiolase-like superfamily. FabH family. As to quaternary structure, homodimer.

The protein resides in the cytoplasm. The catalysed reaction is malonyl-[ACP] + acetyl-CoA + H(+) = 3-oxobutanoyl-[ACP] + CO2 + CoA. It participates in lipid metabolism; fatty acid biosynthesis. Catalyzes the condensation reaction of fatty acid synthesis by the addition to an acyl acceptor of two carbons from malonyl-ACP. Catalyzes the first condensation reaction which initiates fatty acid synthesis and may therefore play a role in governing the total rate of fatty acid production. Possesses both acetoacetyl-ACP synthase and acetyl transacylase activities. Its substrate specificity determines the biosynthesis of branched-chain and/or straight-chain of fatty acids. This Rickettsia typhi (strain ATCC VR-144 / Wilmington) protein is Beta-ketoacyl-[acyl-carrier-protein] synthase III.